We begin with the raw amino-acid sequence, 245 residues long: Mitochondrial import inner membrane translocase subunit Tim21 (245 aa).

The transit peptide at 1–18 (MICAFLRVVRHAEKLHGS) directs the protein to the mitochondrion. Positions 64–97 (FWTQGPDPRKAKEDSSKQVSINRNQREETGVSTS) are disordered. The span at 70–79 (DPRKAKEDSS) shows a compositional bias: basic and acidic residues. The helical transmembrane segment at 108 to 128 (TYLIVVLFGVSITGSLLYTIF) threads the bilayer.

This sequence belongs to the TIM21 family. In terms of assembly, component of the TIM23 complex. Component of the MITRAC (mitochondrial translation regulation assembly intermediate of cytochrome c oxidase complex) complex, the core components of this complex being COA3/MITRAC12 and COX14. Interacts with COA3 and MT-CO1/COX1.

The protein resides in the mitochondrion membrane. Its function is as follows. Participates in the translocation of transit peptide-containing proteins across the mitochondrial inner membrane. Also required for assembly of mitochondrial respiratory chain complex I and complex IV as component of the MITRAC (mitochondrial translation regulation assembly intermediate of cytochrome c oxidase complex) complex. Probably shuttles between the presequence translocase and respiratory-chain assembly intermediates in a process that promotes incorporation of early nuclear-encoded subunits into these complexes. The polypeptide is Mitochondrial import inner membrane translocase subunit Tim21 (Timm21) (Rattus norvegicus (Rat)).